The sequence spans 328 residues: 4-hydroxythreonine-4-phosphate dehydrogenase (328 aa).

Thr-125 provides a ligand contact to substrate. Residues His-160, His-203, and His-269 each coordinate a divalent metal cation. Substrate is bound by residues Lys-277, Asn-286, and Arg-295.

Belongs to the PdxA family. In terms of assembly, homodimer. It depends on a divalent metal cation as a cofactor.

It is found in the cytoplasm. The catalysed reaction is 4-(phosphooxy)-L-threonine + NAD(+) = 3-amino-2-oxopropyl phosphate + CO2 + NADH. The protein operates within cofactor biosynthesis; pyridoxine 5'-phosphate biosynthesis; pyridoxine 5'-phosphate from D-erythrose 4-phosphate: step 4/5. Its function is as follows. Catalyzes the NAD(P)-dependent oxidation of 4-(phosphooxy)-L-threonine (HTP) into 2-amino-3-oxo-4-(phosphooxy)butyric acid which spontaneously decarboxylates to form 3-amino-2-oxopropyl phosphate (AHAP). This is 4-hydroxythreonine-4-phosphate dehydrogenase from Synechococcus sp. (strain RCC307).